Here is a 702-residue protein sequence, read N- to C-terminus: Phosphoglycerol transferase I (702 aa).

Helical transmembrane passes span 2–22 (HWILALSLLLLLWLLVASPRL), 71–91 (FSGYIAVFIGMVLLSLSPLML), and 103–123 (GGAVFGAFVVMLLVSMAVSPV).

It belongs to the OpgB family.

It is found in the cell inner membrane. It carries out the reaction a phosphatidylglycerol + a membrane-derived-oligosaccharide D-glucose = a 1,2-diacyl-sn-glycerol + a membrane-derived-oligosaccharide 6-(glycerophospho)-D-glucose.. The protein operates within glycan metabolism; osmoregulated periplasmic glucan (OPG) biosynthesis. Functionally, transfers a phosphoglycerol residue from phosphatidylglycerol to the membrane-bound nascent glucan backbones. This is Phosphoglycerol transferase I from Xanthomonas campestris pv. campestris (strain B100).